A 137-amino-acid chain; its full sequence is Holo-[acyl-carrier-protein] synthase (137 aa).

Residues D8 and E57 each contribute to the Mg(2+) site.

This sequence belongs to the P-Pant transferase superfamily. AcpS family. Requires Mg(2+) as cofactor.

It localises to the cytoplasm. It catalyses the reaction apo-[ACP] + CoA = holo-[ACP] + adenosine 3',5'-bisphosphate + H(+). Transfers the 4'-phosphopantetheine moiety from coenzyme A to a Ser of acyl-carrier-protein. The protein is Holo-[acyl-carrier-protein] synthase of Cereibacter sphaeroides (strain ATCC 17023 / DSM 158 / JCM 6121 / CCUG 31486 / LMG 2827 / NBRC 12203 / NCIMB 8253 / ATH 2.4.1.) (Rhodobacter sphaeroides).